Reading from the N-terminus, the 516-residue chain is H/ACA ribonucleoprotein complex subunit DKC1 (516 aa).

The interval 1–24 is disordered; it reads MADGDGSSVKKRRKKDKRSLPDED. Residue Asp-123 is the Nucleophile of the active site. The PUA domain maps to 294 to 369; that stretch reads HKRLVMKDSA…VVAKIKRVIM (76 aa). The interval 422–516 is disordered; sequence KKEAAKVPQA…KQKEVEESSE (95 aa). Residues 434–446 show a composition bias toward basic and acidic residues; it reads EVERAPKRKRESE. The span at 453-464 shows a compositional bias: pro residues; it reads SPPPSPATPPPE. The stretch at 463-516 forms a coiled coil; it reads PEELSKKEKKKKKKEKKAKEAAESGEEQVEVISESSAKKKKKKKKQKEVEESSE. Basic residues predominate over residues 469-478; that stretch reads KEKKKKKKEK.

The protein belongs to the pseudouridine synthase TruB family. Part of the H/ACA small nucleolar ribonucleoprotein (H/ACA snoRNP) complex, which contains NHP2/NOLA2, GAR1/NOLA1, NOP10/NOLA3, and DKC1/NOLA4, which is presumed to be the catalytic subunit. The complex contains a stable core formed by binding of one or two NOP10-DKC1 heterodimers to NHP2; GAR1 subsequently binds to this core via DKC1. The complex binds a box H/ACA small nucleolar RNA (snoRNA), which may target the specific site of modification within the RNA substrate.

It is found in the nucleus. The protein localises to the nucleolus. The protein resides in the cajal body. The catalysed reaction is uridine in 5S rRNA = pseudouridine in 5S rRNA. Functionally, catalytic subunit of H/ACA small nucleolar ribonucleoprotein (H/ACA snoRNP) complex, which catalyzes pseudouridylation of rRNA. This involves the isomerization of uridine such that the ribose is subsequently attached to C5, instead of the normal N1. Each rRNA can contain up to 100 pseudouridine ('psi') residues, which may serve to stabilize the conformation of rRNAs. Required for ribosome biogenesis and telomere maintenance. The polypeptide is H/ACA ribonucleoprotein complex subunit DKC1 (DKC1) (Gallus gallus (Chicken)).